The primary structure comprises 151 residues: UPF0178 protein YaiI (151 aa).

This sequence belongs to the UPF0178 family.

The protein is UPF0178 protein YaiI of Salmonella choleraesuis (strain SC-B67).